We begin with the raw amino-acid sequence, 83 residues long: MIKLRLKRYGKKRNATYRIVAMNNTDRRDGRALEELGFYDPIHNEVRLKEEAIKRRLAQGAQPTDTVRRLFVKANLLPETAQK.

It belongs to the bacterial ribosomal protein bS16 family.

This chain is Small ribosomal subunit protein bS16, found in Thermosynechococcus vestitus (strain NIES-2133 / IAM M-273 / BP-1).